Here is a 356-residue protein sequence, read N- to C-terminus: Dihydroorotate dehydrogenase (quinone) (356 aa).

Residues 66 to 70 (AGFDK) and Thr-90 each bind FMN. Lys-70 provides a ligand contact to substrate. Substrate is bound at residue 115 to 119 (NRMGF). FMN contacts are provided by Asn-143 and Asn-176. Asn-176 serves as a coordination point for substrate. Ser-179 functions as the Nucleophile in the catalytic mechanism. Position 181 (Asn-181) interacts with substrate. FMN is bound by residues Lys-212 and Thr-240. Residue 241–242 (NT) coordinates substrate. FMN contacts are provided by residues Gly-266, Gly-295, and 316 to 317 (YT).

It belongs to the dihydroorotate dehydrogenase family. Type 2 subfamily. As to quaternary structure, monomer. The cofactor is FMN.

The protein resides in the cell membrane. The enzyme catalyses (S)-dihydroorotate + a quinone = orotate + a quinol. It participates in pyrimidine metabolism; UMP biosynthesis via de novo pathway; orotate from (S)-dihydroorotate (quinone route): step 1/1. Its function is as follows. Catalyzes the conversion of dihydroorotate to orotate with quinone as electron acceptor. This is Dihydroorotate dehydrogenase (quinone) from Rhodococcus erythropolis (strain PR4 / NBRC 100887).